A 383-amino-acid polypeptide reads, in one-letter code: Adaptive-response sensory kinase SasA (383 aa).

The Histidine kinase domain maps to 161-383 (MLAHDLRSPL…SFHFTLPVYR (223 aa)). At histidine 164 the chain carries Phosphohistidine; by autocatalysis.

As to quaternary structure, homooligomerizes. Interacts with KaiC1. Interacts with KaiC1 and RpaA. Binds to the B-loop in the CI domain of KaiC; SasA and KaiB compete to bind to the CI domain.

It catalyses the reaction ATP + protein L-histidine = ADP + protein N-phospho-L-histidine.. Its function is as follows. Member of the two-component regulatory system SasA/RpaA involved in genome-wide circadian gene expression. One of several clock output pathways. Participates in the Kai clock protein complex, the main circadian regulator in cyanobacteria, via its interaction with KaiC. KaiC enhances the autophosphorylation activity of SasA, which then transfers its phosphate group to RpaA to activate it. In addition to its output function, recruits fold-shifted KaiB (KaiB(fs)) to KaiC to cooperatively form the KaiB(6):KaiC(6) complex (independent of SasA kinase activity). Required for robustness of the circadian rhythm of gene expression and is involved in clock output, also required for adaptation to light/dark cycles. In terms of biological role, plays an important role in glucose metabolism, important for expression of genes involved in glycolysis, gluconeogenesis, the oxidative pentose phosphate pathway, and glycogen metabolism. Required for heterotrophic growth. Overexpression from the psbAII promoter leads to altered levels of genes involved in carbon metabolism, increased levels of transcripts for clock oscillator genes in the light and the dark, complete loss of glycogen accumulation, decreased levels of metabolites of sugar catabolism and increased levels of amino acids in the light and increased levels of SigE protein. The sequence is that of Adaptive-response sensory kinase SasA from Synechocystis sp. (strain ATCC 27184 / PCC 6803 / Kazusa).